The sequence spans 246 residues: Bis(5'-nucleosyl)-tetraphosphatase PrpE [asymmetrical] (246 aa).

The protein belongs to the PrpE family. The cofactor is Ni(2+).

It catalyses the reaction P(1),P(4)-bis(5'-guanosyl) tetraphosphate + H2O = GMP + GTP + 2 H(+). In terms of biological role, asymmetrically hydrolyzes Ap4p to yield AMP and ATP. The protein is Bis(5'-nucleosyl)-tetraphosphatase PrpE [asymmetrical] of Bacillus cereus (strain 03BB102).